We begin with the raw amino-acid sequence, 222 residues long: UPF0758 protein HSM_0009 (222 aa).

One can recognise an MPN domain in the interval 99 to 222 (QEFTSPDTVR…YFSFAEQGWI (124 aa)). The Zn(2+) site is built by histidine 171, histidine 173, and aspartate 184. The short motif at 171 to 184 (HNHPSGVSTPSMAD) is the JAMM motif element.

The protein belongs to the UPF0758 family.

This Histophilus somni (strain 2336) (Haemophilus somnus) protein is UPF0758 protein HSM_0009.